The following is a 177-amino-acid chain: Peptide methionine sulfoxide reductase MsrA (177 aa).

The active site involves cysteine 14.

Belongs to the MsrA Met sulfoxide reductase family.

It carries out the reaction L-methionyl-[protein] + [thioredoxin]-disulfide + H2O = L-methionyl-(S)-S-oxide-[protein] + [thioredoxin]-dithiol. It catalyses the reaction [thioredoxin]-disulfide + L-methionine + H2O = L-methionine (S)-S-oxide + [thioredoxin]-dithiol. Its function is as follows. Has an important function as a repair enzyme for proteins that have been inactivated by oxidation. Catalyzes the reversible oxidation-reduction of methionine sulfoxide in proteins to methionine. The protein is Peptide methionine sulfoxide reductase MsrA of Bacillus velezensis (strain DSM 23117 / BGSC 10A6 / LMG 26770 / FZB42) (Bacillus amyloliquefaciens subsp. plantarum).